Consider the following 1417-residue polypeptide: DNA-directed RNA polymerase subunit beta' (1417 aa).

Residues Cys68, Cys70, Cys83, and Cys86 each contribute to the Zn(2+) site. Mg(2+) is bound by residues Asp458, Asp460, and Asp462. Cys811, Cys884, Cys891, and Cys894 together coordinate Zn(2+).

It belongs to the RNA polymerase beta' chain family. In terms of assembly, the RNAP catalytic core consists of 2 alpha, 1 beta, 1 beta' and 1 omega subunit. When a sigma factor is associated with the core the holoenzyme is formed, which can initiate transcription. Requires Mg(2+) as cofactor. The cofactor is Zn(2+).

It carries out the reaction RNA(n) + a ribonucleoside 5'-triphosphate = RNA(n+1) + diphosphate. Its function is as follows. DNA-dependent RNA polymerase catalyzes the transcription of DNA into RNA using the four ribonucleoside triphosphates as substrates. The chain is DNA-directed RNA polymerase subunit beta' from Francisella tularensis subsp. tularensis (strain FSC 198).